Reading from the N-terminus, the 118-residue chain is Altered inheritance of mitochondria protein 26, mitochondrial (118 aa).

3 helical membrane passes run 7-27 (EHLL…AYFF), 41-61 (LAVT…SIPA), and 98-118 (FLFC…GLSI).

Its subcellular location is the mitochondrion membrane. In terms of biological role, involved in selective mitochondria autophagy (mitophagy). The chain is Altered inheritance of mitochondria protein 26, mitochondrial (AIM26) from Saccharomyces cerevisiae (strain ATCC 204508 / S288c) (Baker's yeast).